We begin with the raw amino-acid sequence, 541 residues long: Sialate O-acetylesterase (541 aa).

The signal sequence occupies residues 1–23 (MVSPGPVFGIVLLIIARVSRSAG). 8 N-linked (GlcNAc...) asparagine glycosylation sites follow: asparagine 107, asparagine 138, asparagine 188, asparagine 293, asparagine 356, asparagine 427, asparagine 448, and asparagine 462.

As to quaternary structure, disulfide-linked heterodimer of a small subunit and a large subunit. The two subunits are derived from a single precursor by proteolytic cleavage. In terms of processing, the lysosomal isoform is glycosylated. As to expression, highly expressed in liver, testis, and kidney, whereas skeletal muscle, adipose tissue, and heart have lower levels. Highest expression in brain and ovary and lower levels in liver and thymus.

It is found in the lysosome. It localises to the cytoplasm. It carries out the reaction N-acetyl-9-O-acetylneuraminate + H2O = N-acetylneuraminate + acetate + H(+). The catalysed reaction is an Ac-O-9-sialoglycoconjugate + H2O = a sialoglycoconjugate + acetate + H(+). With respect to regulation, inhibited by diisopropyl fluorophosphate and diethyl-P-nitrophenyl phosphate. Functionally, catalyzes the removal of O-acetyl ester groups from position 9 of the free diacetylated sialate N-acetyl-9-O-acetylneuraminate (Neu5,9Ac2) in the cytosol and of the diacetylated sialate residues of sialylglycoconjugates in the lysosomes. Together with the sialate-O-acetyltransferase they regulate the balance of acetylated sialoglycoconjugates, key players in various processes such as cell-cell interactions, host-pathogen recognition, and tumor antigenicity. The protein is Sialate O-acetylesterase (Siae) of Mus musculus (Mouse).